Here is a 348-residue protein sequence, read N- to C-terminus: Peroxidase 40 (348 aa).

Residues 1–21 (MKNLFNLFLMFFFAMPILSLS) form the signal peptide. N26 is a glycosylation site (N-linked (GlcNAc...) asparagine). 4 cysteine pairs are disulfide-bonded: C59–C139, C92–C97, C145–C344, and C224–C256. H90 serves as the catalytic Proton acceptor. Residues D91, V94, G96, D98, and S100 each coordinate Ca(2+). Positions 170–189 (GRKDSRTASKQAATNGLPSP) are disordered. Over residues 177–189 (ASKQAATNGLPSP) the composition is skewed to polar residues. Position 187 (P187) interacts with substrate. N190 carries N-linked (GlcNAc...) asparagine glycosylation. H217 provides a ligand contact to heme b. T218 provides a ligand contact to Ca(2+). D269, T272, and D277 together coordinate Ca(2+).

This sequence belongs to the peroxidase family. Classical plant (class III) peroxidase subfamily. The cofactor is heme b. It depends on Ca(2+) as a cofactor.

It localises to the secreted. It catalyses the reaction 2 a phenolic donor + H2O2 = 2 a phenolic radical donor + 2 H2O. In terms of biological role, removal of H(2)O(2), oxidation of toxic reductants, biosynthesis and degradation of lignin, suberization, auxin catabolism, response to environmental stresses such as wounding, pathogen attack and oxidative stress. These functions might be dependent on each isozyme/isoform in each plant tissue. The chain is Peroxidase 40 (PER40) from Arabidopsis thaliana (Mouse-ear cress).